The primary structure comprises 622 residues: Protein translocase subunit SecD (622 aa).

6 helical membrane-spanning segments follow: residues 6-26 (FKIG…YPTV), 460-480 (AGLR…IFYY), 485-505 (MIAD…LAAF), 512-532 (PGIA…VLIF), 559-579 (AIFD…SFGV), and 584-604 (GFAV…IVIT).

The protein belongs to the SecD/SecF family. SecD subfamily. In terms of assembly, forms a complex with SecF. Part of the essential Sec protein translocation apparatus which comprises SecA, SecYEG and auxiliary proteins SecDF. Other proteins may also be involved.

The protein localises to the cell inner membrane. Its function is as follows. Part of the Sec protein translocase complex. Interacts with the SecYEG preprotein conducting channel. SecDF uses the proton motive force (PMF) to complete protein translocation after the ATP-dependent function of SecA. The protein is Protein translocase subunit SecD of Rhodothermus marinus (strain ATCC 43812 / DSM 4252 / R-10) (Rhodothermus obamensis).